A 739-amino-acid chain; its full sequence is BEL1-like homeodomain protein 2 (739 aa).

2 disordered regions span residues 23-73 and 143-222; these read SQDY…ESSV and LMNP…NSQT. Residues 41 to 58 are compositionally biased toward polar residues; the sequence is NFSNGFDRSDSPNLTTQQ. Residues 145–155 show a composition bias toward pro residues; it reads NPPPPQQPPSP. Positions 179-190 are enriched in low complexity; that stretch reads TNTTHHQNYTNH. The segment at 316-332 is SR/KY domain; it reads SRYTTAAQELLEEFCSV. Residues 341–378 form a disordered region; it reads KLGNSSNPNTCGGDGGGSSPSSAGANKEHPPLSASDRI. The segment at 376–447 is BELL domain; that stretch reads DRIEHQRRKV…CLKDAVAAQL (72 aa). Residues 498–560 constitute a DNA-binding region (homeobox); the sequence is AWRPQRGLPE…NARVRLWKPM (63 aa). The interval 567–627 is disordered; sequence QESKEREREE…TAPDASDADA (61 aa). Acidic residues predominate over residues 576-585; sequence EELEENEEDQ. Positions 586 to 596 are enriched in basic and acidic residues; the sequence is ETKNSNDDKST. Low complexity predominate over residues 597 to 627; it reads KSNNNESNFTAVRTTSQTPTTTAPDASDADA.

It belongs to the TALE/BELL homeobox family. As to quaternary structure, may form heterodimeric complexes with TALE/KNOX proteins STM, KNAT1/BP, KNAT2 and KNAT5. Interacts with OFP1, OFP2, OFP4 and OFP5. Interacts with KNATM, isoform KNATM-B. As to expression, expressed in lateral organs.

Its subcellular location is the nucleus. Functionally, transcription factor that establishes leaf shape by repressing growth in specific subdomains of the leaf. Negatively regulates knox homeobox gene KNAT1/BP expression. This is BEL1-like homeodomain protein 2 (BLH2) from Arabidopsis thaliana (Mouse-ear cress).